The primary structure comprises 348 residues: Fructose-1,6-bisphosphatase class 1 (348 aa).

The Mg(2+) site is built by glutamate 92, aspartate 111, leucine 113, and aspartate 114. Residues 114-117 and asparagine 204 contribute to the substrate site; that span reads DGSS. Glutamate 276 provides a ligand contact to Mg(2+).

This sequence belongs to the FBPase class 1 family. In terms of assembly, homotetramer. The cofactor is Mg(2+).

The protein localises to the cytoplasm. It catalyses the reaction beta-D-fructose 1,6-bisphosphate + H2O = beta-D-fructose 6-phosphate + phosphate. Its pathway is carbohydrate biosynthesis; gluconeogenesis. The chain is Fructose-1,6-bisphosphatase class 1 from Methylorubrum extorquens (strain PA1) (Methylobacterium extorquens).